Reading from the N-terminus, the 255-residue chain is 1-(5-phosphoribosyl)-5-[(5-phosphoribosylamino)methylideneamino] imidazole-4-carboxamide isomerase (255 aa).

Catalysis depends on Asp-8, which acts as the Proton acceptor. The Proton donor role is filled by Asp-129.

The protein belongs to the HisA/HisF family.

The protein resides in the cytoplasm. It catalyses the reaction 1-(5-phospho-beta-D-ribosyl)-5-[(5-phospho-beta-D-ribosylamino)methylideneamino]imidazole-4-carboxamide = 5-[(5-phospho-1-deoxy-D-ribulos-1-ylimino)methylamino]-1-(5-phospho-beta-D-ribosyl)imidazole-4-carboxamide. The protein operates within amino-acid biosynthesis; L-histidine biosynthesis; L-histidine from 5-phospho-alpha-D-ribose 1-diphosphate: step 4/9. In Parasynechococcus marenigrum (strain WH8102), this protein is 1-(5-phosphoribosyl)-5-[(5-phosphoribosylamino)methylideneamino] imidazole-4-carboxamide isomerase.